The primary structure comprises 712 residues: Protein TAPT1 homolog (712 aa).

The span at 1-21 shows a compositional bias: low complexity; that stretch reads MNNVPSTSRENSRNPSESSSS. Disordered regions lie at residues 1–22 and 44–66; these read MNNV…SSSI and ITMS…EIET. The next 7 membrane-spanning stretches (helical) occupy residues 196-216, 222-242, 305-325, 379-399, 402-422, 470-490, and 497-517; these read FFYL…GALL, TSAE…SMLI, TCGH…LVIL, HIFA…NWNI, FTEM…VDWL, GFIP…TFTL, and IIFG…GVVM. Residues 596 to 619 are compositionally biased toward basic and acidic residues; the sequence is EIRRSTDRETAVSHLTARSDERTP. A disordered region spans residues 596-712; sequence EIRRSTDRET…MPEQGVQRIE (117 aa). Positions 656–667 are enriched in polar residues; the sequence is TENNTNSNSEQA. The segment covering 675 to 692 has biased composition (low complexity); that stretch reads TAAPVTSSASTNTNATSS.

It belongs to the TAPT1 family.

The protein resides in the membrane. This chain is Protein TAPT1 homolog, found in Caenorhabditis elegans.